A 222-amino-acid chain; its full sequence is Peptide methionine sulfoxide reductase MsrA (222 aa).

The active site involves Cys55.

The protein belongs to the MsrA Met sulfoxide reductase family.

It catalyses the reaction L-methionyl-[protein] + [thioredoxin]-disulfide + H2O = L-methionyl-(S)-S-oxide-[protein] + [thioredoxin]-dithiol. The catalysed reaction is [thioredoxin]-disulfide + L-methionine + H2O = L-methionine (S)-S-oxide + [thioredoxin]-dithiol. Has an important function as a repair enzyme for proteins that have been inactivated by oxidation. Catalyzes the reversible oxidation-reduction of methionine sulfoxide in proteins to methionine. This is Peptide methionine sulfoxide reductase MsrA from Streptomyces griseus subsp. griseus (strain JCM 4626 / CBS 651.72 / NBRC 13350 / KCC S-0626 / ISP 5235).